The chain runs to 308 residues: tRNA uridine(34) hydroxylase (308 aa).

A Rhodanese domain is found at A128–S222. Catalysis depends on C182, which acts as the Cysteine persulfide intermediate.

Belongs to the TrhO family.

It catalyses the reaction uridine(34) in tRNA + AH2 + O2 = 5-hydroxyuridine(34) in tRNA + A + H2O. Functionally, catalyzes oxygen-dependent 5-hydroxyuridine (ho5U) modification at position 34 in tRNAs. The protein is tRNA uridine(34) hydroxylase of Brucella suis biovar 1 (strain 1330).